A 221-amino-acid polypeptide reads, in one-letter code: Deoxyribose-phosphate aldolase (221 aa).

D89 serves as the catalytic Proton donor/acceptor. K151 functions as the Schiff-base intermediate with acetaldehyde in the catalytic mechanism. Residue K180 is the Proton donor/acceptor of the active site.

The protein belongs to the DeoC/FbaB aldolase family. DeoC type 1 subfamily.

The protein resides in the cytoplasm. It catalyses the reaction 2-deoxy-D-ribose 5-phosphate = D-glyceraldehyde 3-phosphate + acetaldehyde. Its pathway is carbohydrate degradation; 2-deoxy-D-ribose 1-phosphate degradation; D-glyceraldehyde 3-phosphate and acetaldehyde from 2-deoxy-alpha-D-ribose 1-phosphate: step 2/2. Functionally, catalyzes a reversible aldol reaction between acetaldehyde and D-glyceraldehyde 3-phosphate to generate 2-deoxy-D-ribose 5-phosphate. The chain is Deoxyribose-phosphate aldolase from Mesomycoplasma hyopneumoniae (strain J / ATCC 25934 / NCTC 10110) (Mycoplasma hyopneumoniae).